The following is a 193-amino-acid chain: Rho-related protein racB (193 aa).

Residues Ala13, Gly15, Lys16, Thr17, Cys18, Tyr32, Thr35, Gly60, Lys116, Asp118, and Ala159 each coordinate GTP. Residue Thr17 coordinates Mg(2+). Short sequence motifs (switch) lie at residues 26–37 (NAFPTEYVPTVF) and 57–75 (DTAG…YPQT). Mg(2+) is bound at residue Thr35. Cys190 is modified (cysteine methyl ester). Cys190 carries S-geranylgeranyl cysteine lipidation. The propeptide at 191-193 (LIF) is removed in mature form.

It belongs to the small GTPase superfamily. Rho family. Mg(2+) is required as a cofactor.

It is found in the cell membrane. Its subcellular location is the cytoplasm. The protein resides in the cytoskeleton. It catalyses the reaction GTP + H2O = GDP + phosphate + H(+). With respect to regulation, regulated by guanine nucleotide exchange factors (GEFs) which promote the exchange of bound GDP for free GTP, GTPase activating proteins (GAPs) which increase the GTP hydrolysis activity, and GDP dissociation inhibitors which inhibit the dissociation of the nucleotide from the GTPase. In terms of biological role, small GTPase which cycles between active GTP-bound and inactive GDP-bound states. The chain is Rho-related protein racB from Entamoeba histolytica (strain ATCC 30459 / HM-1:IMSS / ABRM).